Consider the following 214-residue polypeptide: Small ribosomal subunit protein eS6 (214 aa).

Belongs to the eukaryotic ribosomal protein eS6 family.

The polypeptide is Small ribosomal subunit protein eS6 (Saccharolobus solfataricus (strain ATCC 35092 / DSM 1617 / JCM 11322 / P2) (Sulfolobus solfataricus)).